The following is a 760-amino-acid chain: Penicillin-binding protein 1B (760 aa).

The Cytoplasmic segment spans residues 1 to 8; sequence MFFNFKKY. The helical; Signal-anchor for type II membrane protein transmembrane segment at 9–29 threads the bilayer; that stretch reads FLIKVFFFVLILTLCYGLYLY. At 30 to 760 the chain is on the extracellular side; the sequence is VKINRFINGK…NFLFWLKNLF (731 aa). The transglycosylase stretch occupies residues 136–308; the sequence is FRLEPKLIAM…SLYSPWTNPN (173 aa). Residue glutamate 174 is the Proton donor; for transglycosylase activity of the active site. Residues 392–684 form a transpeptidase region; sequence EQAVKIEIPI…SSGAMQIYKR (293 aa). The active-site Acyl-ester intermediate; for transpeptidase activity is the serine 451.

The protein in the N-terminal section; belongs to the glycosyltransferase 51 family. In the C-terminal section; belongs to the transpeptidase family.

The protein resides in the cell membrane. The catalysed reaction is [GlcNAc-(1-&gt;4)-Mur2Ac(oyl-L-Ala-gamma-D-Glu-L-Lys-D-Ala-D-Ala)](n)-di-trans,octa-cis-undecaprenyl diphosphate + beta-D-GlcNAc-(1-&gt;4)-Mur2Ac(oyl-L-Ala-gamma-D-Glu-L-Lys-D-Ala-D-Ala)-di-trans,octa-cis-undecaprenyl diphosphate = [GlcNAc-(1-&gt;4)-Mur2Ac(oyl-L-Ala-gamma-D-Glu-L-Lys-D-Ala-D-Ala)](n+1)-di-trans,octa-cis-undecaprenyl diphosphate + di-trans,octa-cis-undecaprenyl diphosphate + H(+). It catalyses the reaction Preferential cleavage: (Ac)2-L-Lys-D-Ala-|-D-Ala. Also transpeptidation of peptidyl-alanyl moieties that are N-acyl substituents of D-alanine.. It participates in cell wall biogenesis; peptidoglycan biosynthesis. Cell wall formation. Synthesis of cross-linked peptidoglycan from the lipid intermediates. The enzyme has a penicillin-insensitive transglycosylase N-terminal domain (formation of linear glycan strands) and a penicillin-sensitive transpeptidase C-terminal domain (cross-linking of the peptide subunits). The protein is Penicillin-binding protein 1B (mrcB) of Buchnera aphidicola subsp. Acyrthosiphon pisum (strain APS) (Acyrthosiphon pisum symbiotic bacterium).